We begin with the raw amino-acid sequence, 507 residues long: Serine hydroxymethyltransferase (507 aa).

Lys-283 is subject to N6-(pyridoxal phosphate)lysine.

The protein belongs to the SHMT family. As to quaternary structure, homotetramer. Requires pyridoxal 5'-phosphate as cofactor.

The enzyme catalyses (6R)-5,10-methylene-5,6,7,8-tetrahydrofolate + glycine + H2O = (6S)-5,6,7,8-tetrahydrofolate + L-serine. The protein operates within one-carbon metabolism; tetrahydrofolate interconversion. Interconversion of serine and glycine. This is Serine hydroxymethyltransferase (mel-32) from Caenorhabditis elegans.